Reading from the N-terminus, the 541-residue chain is Cytochrome P450 monooxygenase claU (541 aa).

The chain crosses the membrane as a helical span at residues 12-32 (VIDTLVILFSTWAFLGLIRVI). Cys-480 is a binding site for heme.

Belongs to the cytochrome P450 family. The cofactor is heme.

It localises to the membrane. Its pathway is secondary metabolite biosynthesis; terpenoid biosynthesis. Functionally, cytochrome P450 monooxygenase; part of the gene cluster that mediates the biosynthesis of clavilactone A, a meroterpenoid that features a unique benzo-fused ten-membered carbocyclic ring unit with an alpha,beta-epoxy-gamma-lactone moiety, forming an intriguing 10/5/3 tricyclic nested skeleton. Cytochrome P450 monooxygenases claO, claP, claQ, claU, and claW are close orthologs, suggesting that a redundant function or pseudogenes are present in the cla cluster. These monoxygenases are not involved in clavilactone A biosynthesis nor its modification. ClaR, ClaS and ClaT are sufficient to produce clavilactone A. The biosynthesis begins with the prenyltransferase claS that transfers geranyl pyrophosphate (GPP) to hydroquinone to produces geranylhydroquinone. The cytochrome P450 monooxygenase claR then catalyzes the diradical coupling reaction between the intramolecular hydroquinone and allyl moieties to form the benzo-fused ten-membered carbocyclic ring unit of wigantol. Finally the cytochrome P450 monooxygenase claT exquisitely and stereoselectively assembles the alpha,beta-epoxy-gamma-lactone moiety, producing clavilactone A via arnebinol A. In Ampulloclitocybe clavipes (Club foot), this protein is Cytochrome P450 monooxygenase claU.